We begin with the raw amino-acid sequence, 376 residues long: DNA replication and repair protein RecF (376 aa).

30–37 (GHNGVGKT) provides a ligand contact to ATP.

It belongs to the RecF family.

It localises to the cytoplasm. Functionally, the RecF protein is involved in DNA metabolism; it is required for DNA replication and normal SOS inducibility. RecF binds preferentially to single-stranded, linear DNA. It also seems to bind ATP. The chain is DNA replication and repair protein RecF from Salinispora arenicola (strain CNS-205).